A 211-amino-acid polypeptide reads, in one-letter code: Testis-expressed protein 35 (211 aa).

A coiled-coil region spans residues 47–111 (GGTKELKNEL…MDVLINIQKN (65 aa)).

The chain is Testis-expressed protein 35 (Tex35) from Bos taurus (Bovine).